The following is a 63-amino-acid chain: Cytochrome c oxidase subunit 7C, mitochondrial (63 aa).

Residues 1 to 16 constitute a mitochondrion transit peptide; the sequence is MWGQGVRRFTTSVVRR. Residues 17-33 lie on the Mitochondrial matrix side of the membrane; the sequence is SHYEEGPGKNLPFSVEN. The residue at position 25 (K25) is an N6-acetyllysine; alternate. Position 25 is an N6-succinyllysine; alternate (K25). A helical transmembrane segment spans residues 34-60; that stretch reads KWRLLAMMTLYLGSGFAAPFFIVRHQL. Over 61 to 63 the chain is Mitochondrial intermembrane; it reads LKK.

The protein belongs to the cytochrome c oxidase VIIc family. Component of the cytochrome c oxidase (complex IV, CIV), a multisubunit enzyme composed of 14 subunits. The complex is composed of a catalytic core of 3 subunits MT-CO1, MT-CO2 and MT-CO3, encoded in the mitochondrial DNA, and 11 supernumerary subunits COX4I, COX5A, COX5B, COX6A, COX6B, COX6C, COX7A, COX7B, COX7C, COX8 and NDUFA4, which are encoded in the nuclear genome. The complex exists as a monomer or a dimer and forms supercomplexes (SCs) in the inner mitochondrial membrane with NADH-ubiquinone oxidoreductase (complex I, CI) and ubiquinol-cytochrome c oxidoreductase (cytochrome b-c1 complex, complex III, CIII), resulting in different assemblies (supercomplex SCI(1)III(2)IV(1) and megacomplex MCI(2)III(2)IV(2)). Interacts with RAB5IF.

It is found in the mitochondrion inner membrane. The protein operates within energy metabolism; oxidative phosphorylation. In terms of biological role, component of the cytochrome c oxidase, the last enzyme in the mitochondrial electron transport chain which drives oxidative phosphorylation. The respiratory chain contains 3 multisubunit complexes succinate dehydrogenase (complex II, CII), ubiquinol-cytochrome c oxidoreductase (cytochrome b-c1 complex, complex III, CIII) and cytochrome c oxidase (complex IV, CIV), that cooperate to transfer electrons derived from NADH and succinate to molecular oxygen, creating an electrochemical gradient over the inner membrane that drives transmembrane transport and the ATP synthase. Cytochrome c oxidase is the component of the respiratory chain that catalyzes the reduction of oxygen to water. Electrons originating from reduced cytochrome c in the intermembrane space (IMS) are transferred via the dinuclear copper A center (CU(A)) of subunit 2 and heme A of subunit 1 to the active site in subunit 1, a binuclear center (BNC) formed by heme A3 and copper B (CU(B)). The BNC reduces molecular oxygen to 2 water molecules using 4 electrons from cytochrome c in the IMS and 4 protons from the mitochondrial matrix. This Carlito syrichta (Philippine tarsier) protein is Cytochrome c oxidase subunit 7C, mitochondrial (COX7C).